The primary structure comprises 347 residues: KRR1 small subunit processome component homolog (347 aa).

The 71-residue stretch at 124-194 folds into the KH domain; it reads GCDIIKIGNL…VRDIVLETMN (71 aa). The span at 231-246 shows a compositional bias: basic residues; sequence NKNLSKRKQPKVKKPK. The disordered stretch occupies residues 231 to 347; it reads NKNLSKRKQP…LLKANKKSKS (117 aa). A coiled-coil region spans residues 271–304; the sequence is FLNKEQKQAKRQQERQTKQAEAAKKQDERRNKDF. Composition is skewed to basic and acidic residues over residues 272–303 and 318–329; these read LNKEQKQAKRQQERQTKQAEAAKKQDERRNKD and KANDNDSSDSRV. Residues 337–347 show a composition bias toward basic residues; sequence KLLKANKKSKS.

Belongs to the KRR1 family. Monomer. Component of the ribosomal small subunit (SSU) processome.

The protein localises to the nucleus. It is found in the nucleolus. Functionally, required for 40S ribosome biogenesis. Involved in nucleolar processing of pre-18S ribosomal RNA and ribosome assembly. Binds to RNA. Required for female germline development, cell viability during eye development and for survival of dividing cells and epithelial cells during early wing disk development. This Drosophila willistoni (Fruit fly) protein is KRR1 small subunit processome component homolog.